A 149-amino-acid polypeptide reads, in one-letter code: D-aminoacyl-tRNA deacylase (149 aa).

The Gly-cisPro motif, important for rejection of L-amino acids motif lies at 137 to 138 (GP).

This sequence belongs to the DTD family. Homodimer.

The protein localises to the cytoplasm. The catalysed reaction is glycyl-tRNA(Ala) + H2O = tRNA(Ala) + glycine + H(+). The enzyme catalyses a D-aminoacyl-tRNA + H2O = a tRNA + a D-alpha-amino acid + H(+). In terms of biological role, an aminoacyl-tRNA editing enzyme that deacylates mischarged D-aminoacyl-tRNAs. Also deacylates mischarged glycyl-tRNA(Ala), protecting cells against glycine mischarging by AlaRS. Acts via tRNA-based rather than protein-based catalysis; rejects L-amino acids rather than detecting D-amino acids in the active site. By recycling D-aminoacyl-tRNA to D-amino acids and free tRNA molecules, this enzyme counteracts the toxicity associated with the formation of D-aminoacyl-tRNA entities in vivo and helps enforce protein L-homochirality. The chain is D-aminoacyl-tRNA deacylase from Thermosipho africanus (strain TCF52B).